An 860-amino-acid polypeptide reads, in one-letter code: Beta-glucosidase A (860 aa).

The N-terminal stretch at methionine 1 to alanine 19 is a signal peptide. N-linked (GlcNAc...) asparagine glycosylation is found at asparagine 61, asparagine 211, and asparagine 252. The active site involves aspartate 280. N-linked (GlcNAc...) asparagine glycosylation is found at asparagine 315, asparagine 322, asparagine 354, asparagine 387, asparagine 442, asparagine 523, asparagine 542, asparagine 564, asparagine 658, asparagine 690, and asparagine 712. The interval serine 719–glycine 753 is disordered.

Belongs to the glycosyl hydrolase 3 family.

Its subcellular location is the secreted. It carries out the reaction Hydrolysis of terminal, non-reducing beta-D-glucosyl residues with release of beta-D-glucose.. It participates in glycan metabolism; cellulose degradation. In terms of biological role, beta-glucosidases are one of a number of cellulolytic enzymes involved in the degradation of cellulosic biomass. Catalyzes the last step releasing glucose from the inhibitory cellobiose. The polypeptide is Beta-glucosidase A (bglA) (Aspergillus kawachii (strain NBRC 4308) (White koji mold)).